The primary structure comprises 190 residues: Protein A52 (190 aa).

The protein belongs to the orthopoxvirus A52R protein family. As to quaternary structure, interacts with host TRAF6 and IRAK2.

Its function is as follows. Bcl-2-like protein which targets host toll-like receptor signaling complexes to suppress innate immune response. Interacts with host TRAF6 to activate p38 and subsequently induce the expression of several cytokines such as IL-10. Also associates with host IRAK2 to inhibit NF-kappa-B signaling. This is Protein A52 from Homo sapiens (Human).